Here is an 872-residue protein sequence, read N- to C-terminus: Cadherin-1 (872 aa).

Positions methionine 1–alanine 25 are cleaved as a signal peptide. Residues glutamate 26–arginine 148 constitute a propeptide that is removed on maturation. 5 consecutive Cadherin domains span residues arginine 148–phenylalanine 256, threonine 257–phenylalanine 370, aspartate 371–phenylalanine 481, leucine 482–leucine 589, and valine 605–glutamate 688. At aspartate 149 to alanine 701 the chain is on the extracellular side. Asparagine 209 is a glycosylation site (N-linked (GlcNAc...) asparagine). Residues aspartate 251 and aspartate 282 each coordinate Ca(2+). Residues asparagine 456, asparagine 552, asparagine 631, and asparagine 669 are each glycosylated (N-linked (GlcNAc...) asparagine). A helical transmembrane segment spans residues isoleucine 702 to phenylalanine 722. The Cytoplasmic portion of the chain corresponds to valine 723 to aspartate 872. Positions glutamate 739 to aspartate 758 are disordered. Residues tyrosine 747–aspartate 758 show a composition bias toward acidic residues.

As to quaternary structure, homodimer. In terms of tissue distribution, abundantly expressed in intestine, stomach, liver, kidney, skin and eye. Also expressed in heart, lung, testis, ovary, muscle and brain.

Its subcellular location is the cell junction. It is found in the adherens junction. The protein resides in the cell membrane. It localises to the endosome. The protein localises to the golgi apparatus. Its subcellular location is the trans-Golgi network. It is found in the cytoplasm. The protein resides in the desmosome. In terms of biological role, cadherins are calcium-dependent cell adhesion proteins. They preferentially interact with themselves in a homophilic manner in connecting cells; cadherins may thus contribute to the sorting of heterogeneous cell types. Promotes organization of radial actin fiber structure and cellular response to contractile forces, via anchoring of radial actin fibers to CDH1 junction complexes at the cell membrane. E-cadherin is a ligand for integrin alpha-E/beta-7. The sequence is that of Cadherin-1 (cdh1) from Xenopus laevis (African clawed frog).